The chain runs to 122 residues: Large ribosomal subunit protein uL14c (122 aa).

It belongs to the universal ribosomal protein uL14 family. Part of the 50S ribosomal subunit.

It is found in the plastid. The protein localises to the chloroplast. Functionally, binds to 23S rRNA. The protein is Large ribosomal subunit protein uL14c of Lactuca sativa (Garden lettuce).